Consider the following 380-residue polypeptide: Glycine betaine/carnitine/choline transport ATP-binding protein OpuCA (380 aa).

The 235-residue stretch at 2–236 folds into the ABC transporter domain; it reads LKLEQVSKVY…PANEFVEEFI (235 aa). 35–42 serves as a coordination point for ATP; the sequence is GPSGCGKT. CBS domains follow at residues 255–314 and 315–373; these read MNRT…VGDV and YRSD…WGDE.

The protein belongs to the ABC transporter superfamily. In terms of assembly, the complex is composed of two ATP-binding proteins (OpuCA), two transmembrane proteins (OpuCB and OpuCD) and a solute-binding protein (OpuCC).

Its activity is regulated as follows. Binds cyclic di-AMP (c-di-AMP), which may regulate the transporter activity. Involved in a high affinity multicomponent binding-protein-dependent transport system for glycine betaine, carnitine and choline; probably responsible for energy coupling to the transport system. This chain is Glycine betaine/carnitine/choline transport ATP-binding protein OpuCA (opuCA), found in Bacillus subtilis (strain 168).